Reading from the N-terminus, the 290-residue chain is MILKAYAKINLTLDVLSKRDDGYHEIRTIMQTVDLYDIINIEKIEEDSIIVTTSSENIPTDNKNHAYIAASLVKERFGVKEGVKIHIQKNIPISAGLAGGSTDAAAVLRGLNKLFGLNLSQNELIELGREIGADVPFCLVGGTALCEGIGEKVTKLKSAPKMNILIAKPEVYVSTQAVYEALDLSKVKKRPNTDAMIVAIEEGNIREIAKNLCNVLETVTVNQYPVINRVKDIMRNHNALGTVMTGSGPAVFGIFANKYDALKAADRLKVFIKEIILTTTCENEFFSNEE.

Residue K8 is part of the active site. 92–102 contacts ATP; it reads PISAGLAGGST. The active site involves D134.

Belongs to the GHMP kinase family. IspE subfamily.

It carries out the reaction 4-CDP-2-C-methyl-D-erythritol + ATP = 4-CDP-2-C-methyl-D-erythritol 2-phosphate + ADP + H(+). It functions in the pathway isoprenoid biosynthesis; isopentenyl diphosphate biosynthesis via DXP pathway; isopentenyl diphosphate from 1-deoxy-D-xylulose 5-phosphate: step 3/6. Functionally, catalyzes the phosphorylation of the position 2 hydroxy group of 4-diphosphocytidyl-2C-methyl-D-erythritol. This Caldicellulosiruptor saccharolyticus (strain ATCC 43494 / DSM 8903 / Tp8T 6331) protein is 4-diphosphocytidyl-2-C-methyl-D-erythritol kinase.